The following is a 1564-amino-acid chain: Nucleoporin nup184 (1564 aa).

The protein resides in the nucleus. It localises to the nuclear pore complex. Its function is as follows. Interacts with pom152 in the core structure of the nuclear pore complex (NPC). Involved in the export of mRNA. The sequence is that of Nucleoporin nup184 (nup184) from Schizosaccharomyces pombe (strain 972 / ATCC 24843) (Fission yeast).